A 533-amino-acid polypeptide reads, in one-letter code: Probable RNA-binding protein 46 (533 aa).

RRM domains lie at 61–139, 141–223, and 236–308; these read CEVF…VSLD, CRLF…WADP, and KVLY…LAKP.

In terms of assembly, interacts with YTHDC2, MEIOC, MOV10, CNOT6L, DDX4, UPF1 and PABPC1.

Its subcellular location is the cytoplasm. Functionally, essential for male and female fertility, playing a crucial role in regulating germ cell development by ensuring the proper progression of meiosis prophase I. Regulates mitotic-to-meiotic transition in spermatogenesis by forming a complex with MEIOC and YTHDC2 which recognizes and down-regulates mitotic transcripts for a successful meiotic entry. Required for normal synaptonemal complex formation during meiosis, binding meiotic cohesin subunit mRNAs containing GCCUAU/GUUCGA motifs in their 3'UTRs regions and positively regulating their translation. Required for spermatogonial differentiation in both developing and adult testis. The protein is Probable RNA-binding protein 46 (RBM46) of Homo sapiens (Human).